We begin with the raw amino-acid sequence, 202 residues long: Small ribosomal subunit protein uS4c (202 aa).

One can recognise an S4 RNA-binding domain in the interval 90 to 158 (MRSDNVIFRL…ISKNIELYQK (69 aa)).

Belongs to the universal ribosomal protein uS4 family. In terms of assembly, part of the 30S ribosomal subunit. Contacts protein S5. The interaction surface between S4 and S5 is involved in control of translational fidelity.

The protein localises to the plastid. It is found in the chloroplast. Functionally, one of the primary rRNA binding proteins, it binds directly to 16S rRNA where it nucleates assembly of the body of the 30S subunit. With S5 and S12 plays an important role in translational accuracy. The chain is Small ribosomal subunit protein uS4c (rps4) from Exsertotheca crispa (Moss).